Reading from the N-terminus, the 551-residue chain is MVETGHHHQHPPAPAAAGHPPVPSMAMARNMGTTWPPAEQLHHLQYCIHSNPSWHETVVLAFQHYIVMLGTTVLIANTLVSPMGGDPGDKARVIQTILFMSGINTLLQTLIGTRLPTVMGVSFAYVLPVLSIIRDYNNGQFDSEKQRFRHTMRTVQGSLIISSFVNIIIGYGQAWGNLIRIFSPIIVVPVVSVVSLGLFLRGFPLLANCVEIGLPMLILLIITQQYLKHAFSRISMILERYALLVCLAIIWAFAAILTVSGAYNNVSTATKQSCRTDRAFLMSSAPWIRIPYPFQWGTPIFKASHVFGMFGAAIVASAESTGVFFAASRLAGATAPPAHVVSRSIGLQGIGVLLEGIFGSITGNTASVENVGLLGLTRIGSRRVVQVSTFFMIFFSIFGKFGAFFASIPLPIFAGVYCILLGIVVAVGISFIQFTDTNSMRNMYVIGVSLFLSLSIAQYFLANTSRAGYGPVRTAGGWFNDILNTIFASAPLVATILATILDNTLEARHASDDARGIPWWKPFQHRNGDGRNDEFYSMPLRINELMPTRFL.

The disordered stretch occupies residues 1–30; the sequence is MVETGHHHQHPPAPAAAGHPPVPSMAMARN. 12 helical membrane passes run 56-76, 92-111, 117-136, 158-178, 179-199, 202-222, 242-262, 306-326, 390-410, 412-432, 442-462, and 481-501; these read ETVV…VLIA, RVIQ…QTLI, TVMG…IRDY, SLII…WGNL, IRIF…LGLF, GFPL…LLII, ALLV…VSGA, VFGM…VFFA, FFMI…SIPL, IFAG…ISFI, NMYV…YFLA, and DILN…ATIL.

Belongs to the nucleobase:cation symporter-2 (NCS2) (TC 2.A.40) family. In terms of tissue distribution, expressed in the apical meristem 4 days after imbibition (DAI). Expressed in the major veins of rosette leaves and pedicels. Expressed in the root central cylinder, root meristems, root tips and lateral root primordia.

The protein resides in the membrane. The polypeptide is Nucleobase-ascorbate transporter 3 (NAT3) (Arabidopsis thaliana (Mouse-ear cress)).